We begin with the raw amino-acid sequence, 151 residues long: Ribosome maturation factor RimP (151 aa).

This sequence belongs to the RimP family.

Its subcellular location is the cytoplasm. Required for maturation of 30S ribosomal subunits. This Shewanella sp. (strain MR-4) protein is Ribosome maturation factor RimP.